The following is a 186-amino-acid chain: Ribosome-recycling factor (186 aa).

Belongs to the RRF family.

Its subcellular location is the cytoplasm. In terms of biological role, responsible for the release of ribosomes from messenger RNA at the termination of protein biosynthesis. May increase the efficiency of translation by recycling ribosomes from one round of translation to another. This Burkholderia thailandensis (strain ATCC 700388 / DSM 13276 / CCUG 48851 / CIP 106301 / E264) protein is Ribosome-recycling factor.